The following is an 862-amino-acid chain: DNA mismatch repair protein MutS (862 aa).

603 to 610 is a binding site for ATP; the sequence is GPNMSGKS.

The protein belongs to the DNA mismatch repair MutS family.

This protein is involved in the repair of mismatches in DNA. It is possible that it carries out the mismatch recognition step. This protein has a weak ATPase activity. The sequence is that of DNA mismatch repair protein MutS from Bacillus velezensis (strain DSM 23117 / BGSC 10A6 / LMG 26770 / FZB42) (Bacillus amyloliquefaciens subsp. plantarum).